We begin with the raw amino-acid sequence, 451 residues long: uncharacterized protein (451 aa).

The N-terminal stretch at 1–18 (MRTRITLALAVLLLLLAG) is a signal peptide. Residue Cys19 is the site of N-palmitoyl cysteine attachment. A lipid anchor (S-diacylglycerol cysteine) is attached at Cys19. A disordered region spans residues 424–451 (TSADPPPGVPRAGKRNIRDATSRLPSTP).

It is found in the cell membrane. Its function is as follows. May participate in oleandomycin glycosylation and secretion during antibiotic production. This is an uncharacterized protein from Streptomyces antibioticus.